The sequence spans 128 residues: SH2 domain-containing protein 1A (128 aa).

The SH2 domain occupies 6–102 (VYHGKISRET…GIVIPLQYPV (97 aa)). The interval 67-92 (ETAPGVHKRYFRKIKNLISAFQKPDQ) is interaction with FYN SH3 domain. At lysine 89 the chain carries N6-acetyllysine. A disordered region spans residues 106–128 (SSARSTQGTTGIREDPDVCLKAP). A compositionally biased stretch (basic and acidic residues) spans 117-128 (IREDPDVCLKAP).

Interacts with CD84, CD244, LY9, SLAMF1 and FYN. Interacts with NTRK1, NTRK2 and NTRK3.

It localises to the cytoplasm. Functionally, cytoplasmic adapter regulating receptors of the signaling lymphocytic activation molecule (SLAM) family such as SLAMF1, CD244, LY9, CD84, SLAMF6 and SLAMF7. In SLAM signaling seems to cooperate with SH2D1B/EAT-2. Initially it has been proposed that association with SLAMF1 prevents SLAMF1 binding to inhibitory effectors including INPP5D/SHIP1 and PTPN11/SHP-2. However, by simultaneous interactions, recruits FYN which subsequently phosphorylates and activates SLAMF1. Positively regulates CD244/2B4- and CD84-mediated natural killer (NK) cell functions. Can also promote CD48-, SLAMF6 -, LY9-, and SLAMF7-mediated NK cell activation. In the context of NK cell-mediated cytotoxicity enhances conjugate formation with target cells. May also regulate the activity of the neurotrophin receptors NTRK1, NTRK2 and NTRK3. The polypeptide is SH2 domain-containing protein 1A (SH2D1A) (Macaca mulatta (Rhesus macaque)).